We begin with the raw amino-acid sequence, 281 residues long: Src-like-adapter (281 aa).

Residues 1–20 (MGNSMKSTSPPSERPLSSSE) are disordered. G2 carries N-myristoyl glycine lipidation. The segment covering 7-20 (STSPPSERPLSSSE) has biased composition (low complexity). Residues 22 to 82 (LESDFLAVLT…PGICVARVYH (61 aa)) form the SH3 domain. The SH2 domain occupies 84–175 (WLFEGLGRDK…GLCCVLTTPC (92 aa)). The tract at residues 190-281 (CTSPGSPVTL…FFSAPQYFED (92 aa)) is SLA C-terminal. At S258 the chain carries Phosphoserine. At Y278 the chain carries Phosphotyrosine.

As to quaternary structure, homodimer. Interacts with phosphorylated CBL, SYK and LAT. Homodimerization and interaction with phosphorylated CBL occurs via its C-terminal domain. Interacts with PDGFRB and EPHA2. Interacts with phosphorylated proteins ZAP70; CD3Z; VAV1 and LCP2 via its SH2 domain. In terms of tissue distribution, predominantly expressed in lymphoid tissues. Highly expressed in spleen, thymus and lymph nodes. Weakly expressed in lung and brain. Expressed in T-cells and at low level in B-cells.

It is found in the cytoplasm. The protein localises to the endosome. Functionally, adapter protein, which negatively regulates T-cell receptor (TCR) signaling. Inhibits T-cell antigen-receptor induced activation of nuclear factor of activated T-cells. Involved in the negative regulation of positive selection and mitosis of T-cells. May act by linking signaling proteins such as ZAP70 with CBL, leading to a CBL dependent degradation of signaling proteins. In Mus musculus (Mouse), this protein is Src-like-adapter (Sla).